Reading from the N-terminus, the 441-residue chain is GTPase Der (441 aa).

EngA-type G domains follow at residues 4–169 (PIVA…PEGS) and 178–353 (PKVA…DAQT). Residues 10–17 (GRPNVGKS), 57–61 (DTGGI), 120–123 (NKVD), 184–191 (GKPNVGKS), 231–235 (DTAGL), and 296–299 (NKWD) each bind GTP. In terms of domain architecture, KH-like spans 354-438 (MRIPTGVLNE…SIRFINRERK (85 aa)).

The protein belongs to the TRAFAC class TrmE-Era-EngA-EngB-Septin-like GTPase superfamily. EngA (Der) GTPase family. Associates with the 50S ribosomal subunit.

In terms of biological role, GTPase that plays an essential role in the late steps of ribosome biogenesis. The polypeptide is GTPase Der (Lachnospira eligens (strain ATCC 27750 / DSM 3376 / VPI C15-48 / C15-B4) (Eubacterium eligens)).